The following is a 198-amino-acid chain: Recombination protein RecR (198 aa).

The segment at 57-72 (CSECGHITEQDPCYIC) adopts a C4-type zinc-finger fold. One can recognise a Toprim domain in the interval 80 to 175 (SVICVVEDDK…TVTRLAQGLS (96 aa)).

The protein belongs to the RecR family.

May play a role in DNA repair. It seems to be involved in an RecBC-independent recombinational process of DNA repair. It may act with RecF and RecO. In Staphylococcus saprophyticus subsp. saprophyticus (strain ATCC 15305 / DSM 20229 / NCIMB 8711 / NCTC 7292 / S-41), this protein is Recombination protein RecR.